A 930-amino-acid chain; its full sequence is Dual serine/threonine and tyrosine protein kinase (930 aa).

Positions 1–14 (MEGDGVPWGSEPVS) are enriched in low complexity. A disordered region spans residues 1-22 (MEGDGVPWGSEPVSGPGPGGGG). Coiled coils occupy residues 190–216 (EEDLEVQENNEDAAHVLAELEVTMHHA) and 396–432 (RKKENELYESLMNIANRKQEEMKDMIVETLNTMKEEL). Positions 653–907 (PKLGQELGRG…PLLGIVQPML (255 aa)) constitute a Protein kinase domain. Residues 659 to 667 (LGRGQYGVV) and Lys-682 contribute to the ATP site. Asp-778 serves as the catalytic Proton acceptor.

It belongs to the protein kinase superfamily. Ser/Thr protein kinase family.

It is found in the cytoplasm. The protein resides in the cell membrane. It localises to the apical cell membrane. Its subcellular location is the basolateral cell membrane. The protein localises to the cell junction. It carries out the reaction L-seryl-[protein] + ATP = O-phospho-L-seryl-[protein] + ADP + H(+). The catalysed reaction is L-threonyl-[protein] + ATP = O-phospho-L-threonyl-[protein] + ADP + H(+). It catalyses the reaction L-tyrosyl-[protein] + ATP = O-phospho-L-tyrosyl-[protein] + ADP + H(+). Its function is as follows. Acts as a positive regulator of ERK phosphorylation downstream of fibroblast growth factor-receptor activation. Involved in the regulation of both caspase-dependent apoptosis and caspase-independent cell death. In the skin, it plays a predominant role in suppressing caspase-dependent apoptosis in response to UV stress in a range of dermal cell types. In Pan troglodytes (Chimpanzee), this protein is Dual serine/threonine and tyrosine protein kinase (DSTYK).